The primary structure comprises 484 residues: Glutamate--tRNA ligase (484 aa).

Positions 11–21 (PSPTGLLHIGN) match the 'HIGH' region motif. The 'KMSKS' region motif lies at 255-259 (KLSKR). Lysine 258 contacts ATP.

The protein belongs to the class-I aminoacyl-tRNA synthetase family. Glutamate--tRNA ligase type 1 subfamily. In terms of assembly, monomer.

Its subcellular location is the cytoplasm. It catalyses the reaction tRNA(Glu) + L-glutamate + ATP = L-glutamyl-tRNA(Glu) + AMP + diphosphate. Its function is as follows. Catalyzes the attachment of glutamate to tRNA(Glu) in a two-step reaction: glutamate is first activated by ATP to form Glu-AMP and then transferred to the acceptor end of tRNA(Glu). This is Glutamate--tRNA ligase from Streptococcus agalactiae serotype V (strain ATCC BAA-611 / 2603 V/R).